The primary structure comprises 300 residues: Cation-efflux pump FieF (300 aa).

The next 4 membrane-spanning stretches (helical) occupy residues 12 to 32 (AALAATLVATLLLIIKIFAWW), 39 to 59 (ILAALVDSLVDIAASLTNLLV), 82 to 102 (AALAQSMFISGSALFLFLTGI), and 114 to 134 (PLVGIVVTVAALVTTLMLVTF). The Zn(2+) site is built by Asp45 and Asp49. Residues His153 and Asp157 each coordinate Zn(2+). 2 helical membrane-spanning segments follow: residues 156-176 (SDVMMNGAILVALALSWYGLH) and 182-202 (FALGIGVWILYSALRMGYEAI).

It belongs to the cation diffusion facilitator (CDF) transporter (TC 2.A.4) family. FieF subfamily. Homodimer.

Its subcellular location is the cell inner membrane. It catalyses the reaction Zn(2+)(in) + H(+)(out) = Zn(2+)(out) + H(+)(in). It carries out the reaction Cd(2+)(in) + H(+)(out) = Cd(2+)(out) + H(+)(in). The catalysed reaction is Fe(2+)(in) + H(+)(out) = Fe(2+)(out) + H(+)(in). Divalent metal cation transporter which exports Zn(2+), Cd(2+) and possibly Fe(2+). May be involved in zinc and iron detoxification by efflux. In Cronobacter sakazakii (strain ATCC BAA-894) (Enterobacter sakazakii), this protein is Cation-efflux pump FieF.